The sequence spans 168 residues: uncharacterized protein (168 aa).

The PfpI endopeptidase domain maps to 1-166; the sequence is MRVLILAENE…FCGELIKILK (166 aa).

The protein belongs to the peptidase C56 family.

This is an uncharacterized protein from Archaeoglobus fulgidus (strain ATCC 49558 / DSM 4304 / JCM 9628 / NBRC 100126 / VC-16).